Reading from the N-terminus, the 408-residue chain is LL-diaminopimelate aminotransferase (408 aa).

2 residues coordinate substrate: tyrosine 15 and glycine 42. Pyridoxal 5'-phosphate is bound by residues tyrosine 72, 108-109 (SK), tyrosine 132, asparagine 187, tyrosine 218, and 246-248 (SFS). Positions 109, 132, and 187 each coordinate substrate. Lysine 249 bears the N6-(pyridoxal phosphate)lysine mark. Positions 257 and 292 each coordinate pyridoxal 5'-phosphate. Substrate-binding residues include asparagine 292 and arginine 388.

It belongs to the class-I pyridoxal-phosphate-dependent aminotransferase family. LL-diaminopimelate aminotransferase subfamily. As to quaternary structure, homodimer. Pyridoxal 5'-phosphate serves as cofactor.

The catalysed reaction is (2S,6S)-2,6-diaminopimelate + 2-oxoglutarate = (S)-2,3,4,5-tetrahydrodipicolinate + L-glutamate + H2O + H(+). Its pathway is amino-acid biosynthesis; L-lysine biosynthesis via DAP pathway; LL-2,6-diaminopimelate from (S)-tetrahydrodipicolinate (aminotransferase route): step 1/1. In terms of biological role, involved in the synthesis of meso-diaminopimelate (m-DAP or DL-DAP), required for both lysine and peptidoglycan biosynthesis. Catalyzes the direct conversion of tetrahydrodipicolinate to LL-diaminopimelate. The chain is LL-diaminopimelate aminotransferase from Prochlorococcus marinus (strain MIT 9312).